The chain runs to 46 residues: uncharacterized protein (46 aa).

Residues 1–46 (MNFGIKPDVSSGPRKGGPFKELSDFSKTSPTPQQPRSLSGKSVMLP) are disordered. The segment covering 25-40 (FSKTSPTPQQPRSLSG) has biased composition (polar residues).

This is an uncharacterized protein from Dictyostelium discoideum (Social amoeba).